A 189-amino-acid chain; its full sequence is Protein GrpE (189 aa).

The segment covering 1–14 has biased composition (basic and acidic residues); that stretch reads MTEKNEEVVEDKNI. Residues 1–38 form a disordered region; it reads MTEKNEEVVEDKNISDQTDENLTEEIESEADDLQVEPD. A compositionally biased stretch (acidic residues) spans 17–35; sequence QTDENLTEEIESEADDLQV.

This sequence belongs to the GrpE family. Homodimer.

It localises to the cytoplasm. Participates actively in the response to hyperosmotic and heat shock by preventing the aggregation of stress-denatured proteins, in association with DnaK and GrpE. It is the nucleotide exchange factor for DnaK and may function as a thermosensor. Unfolded proteins bind initially to DnaJ; upon interaction with the DnaJ-bound protein, DnaK hydrolyzes its bound ATP, resulting in the formation of a stable complex. GrpE releases ADP from DnaK; ATP binding to DnaK triggers the release of the substrate protein, thus completing the reaction cycle. Several rounds of ATP-dependent interactions between DnaJ, DnaK and GrpE are required for fully efficient folding. The protein is Protein GrpE of Leuconostoc mesenteroides subsp. mesenteroides (strain ATCC 8293 / DSM 20343 / BCRC 11652 / CCM 1803 / JCM 6124 / NCDO 523 / NBRC 100496 / NCIMB 8023 / NCTC 12954 / NRRL B-1118 / 37Y).